Consider the following 120-residue polypeptide: NAD(P)H-quinone oxidoreductase subunit 3, chloroplastic (120 aa).

Helical transmembrane passes span 9–29 (IFWAFLIISSLIPILAFFLSG), 62–82 (YYMFALVFVVFDVETVFLYPW), and 88–108 (VLGVSVFIEAFIFVLILIVGL).

It belongs to the complex I subunit 3 family. In terms of assembly, NDH is composed of at least 16 different subunits, 5 of which are encoded in the nucleus.

It localises to the plastid. The protein localises to the chloroplast thylakoid membrane. The enzyme catalyses a plastoquinone + NADH + (n+1) H(+)(in) = a plastoquinol + NAD(+) + n H(+)(out). The catalysed reaction is a plastoquinone + NADPH + (n+1) H(+)(in) = a plastoquinol + NADP(+) + n H(+)(out). NDH shuttles electrons from NAD(P)H:plastoquinone, via FMN and iron-sulfur (Fe-S) centers, to quinones in the photosynthetic chain and possibly in a chloroplast respiratory chain. The immediate electron acceptor for the enzyme in this species is believed to be plastoquinone. Couples the redox reaction to proton translocation, and thus conserves the redox energy in a proton gradient. This is NAD(P)H-quinone oxidoreductase subunit 3, chloroplastic from Trachelium caeruleum (Blue throatwort).